Consider the following 497-residue polypeptide: Probable malate:quinone oxidoreductase (497 aa).

The protein belongs to the MQO family. It depends on FAD as a cofactor.

It catalyses the reaction (S)-malate + a quinone = a quinol + oxaloacetate. The protein operates within carbohydrate metabolism; tricarboxylic acid cycle; oxaloacetate from (S)-malate (quinone route): step 1/1. In Rhodopseudomonas palustris (strain ATCC BAA-98 / CGA009), this protein is Probable malate:quinone oxidoreductase.